Reading from the N-terminus, the 206-residue chain is Large ribosomal subunit protein uL4 (206 aa).

Residues 43 to 78 (ARSGNRKQKDREEVHHTTKKPWRQKGTGRARAGMSS) form a disordered region. Over residues 49-58 (KQKDREEVHH) the composition is skewed to basic and acidic residues. The segment covering 59-70 (TTKKPWRQKGTG) has biased composition (basic residues).

Belongs to the universal ribosomal protein uL4 family. In terms of assembly, part of the 50S ribosomal subunit.

One of the primary rRNA binding proteins, this protein initially binds near the 5'-end of the 23S rRNA. It is important during the early stages of 50S assembly. It makes multiple contacts with different domains of the 23S rRNA in the assembled 50S subunit and ribosome. Its function is as follows. Forms part of the polypeptide exit tunnel. The protein is Large ribosomal subunit protein uL4 of Herminiimonas arsenicoxydans.